The chain runs to 298 residues: Tyrosine recombinase XerC (298 aa).

One can recognise a Core-binding (CB) domain in the interval 1–84; that stretch reads MNHIQEAFLN…TLRTFYEYWM (84 aa). Positions 105-286 constitute a Tyr recombinase domain; that stretch reads YLPQFFYEEE…SNQQLRKVYL (182 aa). Residues Arg-145, Lys-169, His-238, Arg-241, and His-264 contribute to the active site. The active-site O-(3'-phospho-DNA)-tyrosine intermediate is the Tyr-273.

It belongs to the 'phage' integrase family. XerC subfamily. Forms a cyclic heterotetrameric complex composed of two molecules of XerC and two molecules of XerD.

It localises to the cytoplasm. Functionally, site-specific tyrosine recombinase, which acts by catalyzing the cutting and rejoining of the recombining DNA molecules. The XerC-XerD complex is essential to convert dimers of the bacterial chromosome into monomers to permit their segregation at cell division. It also contributes to the segregational stability of plasmids. The protein is Tyrosine recombinase XerC of Staphylococcus aureus (strain JH1).